The primary structure comprises 254 residues: 3-deoxy-manno-octulosonate cytidylyltransferase (254 aa).

It belongs to the KdsB family.

Its subcellular location is the cytoplasm. The catalysed reaction is 3-deoxy-alpha-D-manno-oct-2-ulosonate + CTP = CMP-3-deoxy-beta-D-manno-octulosonate + diphosphate. It participates in nucleotide-sugar biosynthesis; CMP-3-deoxy-D-manno-octulosonate biosynthesis; CMP-3-deoxy-D-manno-octulosonate from 3-deoxy-D-manno-octulosonate and CTP: step 1/1. The protein operates within bacterial outer membrane biogenesis; lipopolysaccharide biosynthesis. Functionally, activates KDO (a required 8-carbon sugar) for incorporation into bacterial lipopolysaccharide in Gram-negative bacteria. The polypeptide is 3-deoxy-manno-octulosonate cytidylyltransferase (Chlamydia trachomatis serovar L2 (strain ATCC VR-902B / DSM 19102 / 434/Bu)).